The primary structure comprises 165 residues: Large ribosomal subunit protein uL22c (165 aa).

The protein belongs to the universal ribosomal protein uL22 family. As to quaternary structure, part of the 50S ribosomal subunit.

Its subcellular location is the plastid. The protein resides in the chloroplast. This protein binds specifically to 23S rRNA. Functionally, the globular domain of the protein is located near the polypeptide exit tunnel on the outside of the subunit, while an extended beta-hairpin is found that lines the wall of the exit tunnel in the center of the 70S ribosome. This Daucus carota (Wild carrot) protein is Large ribosomal subunit protein uL22c (rpl22).